A 566-amino-acid polypeptide reads, in one-letter code: MAKTGKVENLIQNAPEKPGVYLFKKGNRPIYIGKAKNLKKRLLQHLKASEYDSKERAIISNSDNLEWIVTRNEYEALVLEIDLIQQYKPRYNVLHKFGGGYPMLLLTKDEYPTIKVVRGTEHEGELFGPFLQSKKAYKVKKLIHNLFKLRTCDPLPKRSEPCMDYHLGLCSAPCCGFVSKEEYELAVSSARALLTGEVAEVLPKLYEKIEEFSKELMFEKCAHIRDQIIALENLAKGQAVSALPFREGDIFYKFGSRLGLLLVRSSKLVSKEIFDLESDEEVEEVILGYYYSNYVPRKVITNFELSEEVKEWIRNRAKGEVEFSGEIPKELKEVLEENLGEGINEEVLKKEFAEKLGMPVPRVIEGFDISHFYGEDIVGSCVVWKGGKMSKKDYRRYKVKTISRIDDYLALEEVLTRRAKRILKGEVEKPDIWLIDGGKGQLNVGIRVKKRTGLDVKVFSLAKEEEIIYTEDGREIRLKENPILYRVFGEIRDEAHRFALSYNRKLREKRYMEDILSKIKGIGEQKKKIIYKNFETLYDFIEAKDEELRRLGINPSLKQEVKKWLS.

One can recognise a GIY-YIG domain in the interval E16–V93. Residues A199–L234 enclose the UVR domain.

The protein belongs to the UvrC family. As to quaternary structure, interacts with UvrB in an incision complex.

It is found in the cytoplasm. Its function is as follows. The UvrABC repair system catalyzes the recognition and processing of DNA lesions. UvrC both incises the 5' and 3' sides of the lesion. The N-terminal half is responsible for the 3' incision and the C-terminal half is responsible for the 5' incision. This Aquifex aeolicus (strain VF5) protein is UvrABC system protein C.